The primary structure comprises 27 residues: Protein YqiM (27 aa).

This is Protein YqiM from Escherichia coli (strain K12).